We begin with the raw amino-acid sequence, 339 residues long: Methylcobamide:CoM methyltransferase MtaA (339 aa).

Zn(2+) contacts are provided by His-237, Cys-239, and Cys-316.

The protein belongs to the uroporphyrinogen decarboxylase family. MtbA/mtaA subfamily. It depends on Zn(2+) as a cofactor.

It carries out the reaction methyl-Co(III)-[methanol-specific corrinoid protein] + coenzyme M = Co(I)-[methanol-specific corrinoid protein] + methyl-coenzyme M + H(+). Its function is as follows. Methyltransferase involved in methanogenesis in the methanol pathway. Catalyzes the transfer of the methyl group from the methylated corrinoid protein MtaC to coenzyme M, forming the substrate for coenzyme-B sulfoethylthiotransferase. MtaC can be substituted by free cob(I)alamin in vitro. This is Methylcobamide:CoM methyltransferase MtaA (mtaA) from Methanosarcina barkeri (strain Fusaro / DSM 804).